A 158-amino-acid polypeptide reads, in one-letter code: ATP synthase subunit b', chloroplastic (158 aa).

Residues 25–45 traverse the membrane as a helical segment; it reads ATLPLMALQFIILTTILNFIF.

It belongs to the ATPase B chain family. In terms of assembly, F-type ATPases have 2 components, F(1) - the catalytic core - and F(0) - the membrane proton channel. F(1) has five subunits: alpha(3), beta(3), gamma(1), delta(1), epsilon(1). F(0) has four main subunits: a(1), b(1), b'(1) and c(10-14). The alpha and beta chains form an alternating ring which encloses part of the gamma chain. F(1) is attached to F(0) by a central stalk formed by the gamma and epsilon chains, while a peripheral stalk is formed by the delta, b and b' chains.

The protein localises to the plastid. It localises to the chloroplast thylakoid membrane. In terms of biological role, f(1)F(0) ATP synthase produces ATP from ADP in the presence of a proton or sodium gradient. F-type ATPases consist of two structural domains, F(1) containing the extramembraneous catalytic core and F(0) containing the membrane proton channel, linked together by a central stalk and a peripheral stalk. During catalysis, ATP synthesis in the catalytic domain of F(1) is coupled via a rotary mechanism of the central stalk subunits to proton translocation. Functionally, component of the F(0) channel, it forms part of the peripheral stalk, linking F(1) to F(0). The b'-subunit is a diverged and duplicated form of b found in plants and photosynthetic bacteria. The protein is ATP synthase subunit b', chloroplastic of Gracilaria tenuistipitata var. liui (Red alga).